A 468-amino-acid chain; its full sequence is Cysteine--tRNA ligase (468 aa).

Residue C27 coordinates Zn(2+). Positions 29–39 match the 'HIGH' region motif; the sequence is PTVYDDAHLGH. Positions 204, 234, and 238 each coordinate Zn(2+). Residues 266–270 carry the 'KMSKS' region motif; that stretch reads KMSKS. Residue K269 coordinates ATP.

Belongs to the class-I aminoacyl-tRNA synthetase family. In terms of assembly, monomer. It depends on Zn(2+) as a cofactor.

Its subcellular location is the cytoplasm. It carries out the reaction tRNA(Cys) + L-cysteine + ATP = L-cysteinyl-tRNA(Cys) + AMP + diphosphate. This is Cysteine--tRNA ligase from Campylobacter hominis (strain ATCC BAA-381 / DSM 21671 / CCUG 45161 / LMG 19568 / NCTC 13146 / CH001A).